The following is a 199-amino-acid chain: Thymidine kinase (199 aa).

ATP is bound by residues Gly23–Thr30 and Asp95–Gln98. Glu96 serves as the catalytic Proton acceptor. Zn(2+)-binding residues include Cys152, Cys155, Cys184, and Cys187.

This sequence belongs to the thymidine kinase family. Homotetramer.

Its subcellular location is the cytoplasm. The catalysed reaction is thymidine + ATP = dTMP + ADP + H(+). The chain is Thymidine kinase from Bacteroides thetaiotaomicron (strain ATCC 29148 / DSM 2079 / JCM 5827 / CCUG 10774 / NCTC 10582 / VPI-5482 / E50).